Here is a 597-residue protein sequence, read N- to C-terminus: tRNA uridine 5-carboxymethylaminomethyl modification enzyme MnmG (597 aa).

10 to 15 (GGGHAG) contributes to the FAD binding site. Residue 267–281 (GPRYCPSIEDKVVRF) participates in NAD(+) binding.

It belongs to the MnmG family. As to quaternary structure, homodimer. Heterotetramer of two MnmE and two MnmG subunits. FAD is required as a cofactor.

The protein resides in the cytoplasm. Functionally, NAD-binding protein involved in the addition of a carboxymethylaminomethyl (cmnm) group at the wobble position (U34) of certain tRNAs, forming tRNA-cmnm(5)s(2)U34. The sequence is that of tRNA uridine 5-carboxymethylaminomethyl modification enzyme MnmG from Thermus thermophilus (strain ATCC 27634 / DSM 579 / HB8).